The following is a 256-amino-acid chain: MIKILVDNTAYKKFFAQHGFSALIEINNKRILFDAGQNSITLRENLRLFNEKEGFDYIVLSHGHYDHCDGLKYVIENDLINGKVIAHKDAFLDKYAGNRYIGIDEEIKEYLLKKADLEIIEEPYKIDKDIIVSGYVPREYEYEMEEFQCIKDGKRVKDEVNDDMFLIAKGILITGCSHSGIINVVEYGKKLSEIKGVLGGFHLVGVSDNYLNRIVDYFKSQDFWIMPMHCTGFKALTKLSQLNNFVYGHVGKIIGI.

The protein belongs to the metallo-beta-lactamase superfamily.

This is an uncharacterized protein from Methanocaldococcus jannaschii (strain ATCC 43067 / DSM 2661 / JAL-1 / JCM 10045 / NBRC 100440) (Methanococcus jannaschii).